Reading from the N-terminus, the 296-residue chain is Class E basic helix-loop-helix protein 22 (296 aa).

The disordered stretch occupies residues 26–70; it reads SAFRPPQGLDLSQPGDRSPLHCYDGPDPSDLLRHHQHHHQASSGA. The 55-residue stretch at 153–207 folds into the bHLH domain; that stretch reads TLRLNINARERRRMHDLNDALDELRAVIPYAHSPSVRKLSKIATLLLAKNYILMQ.

It is found in the nucleus. May act as a transcriptional repressor. This chain is Class E basic helix-loop-helix protein 22 (bhlhe22), found in Xenopus tropicalis (Western clawed frog).